Consider the following 130-residue polypeptide: Anti-adapter protein IraD (130 aa).

The protein belongs to the GpW/Gp25 family. IraD subfamily. As to quaternary structure, interacts with RssB.

It localises to the cytoplasm. In terms of biological role, inhibits RpoS proteolysis by regulating RssB activity, thereby increasing the stability of the sigma stress factor RpoS during oxidative stress. Its effect on RpoS stability is due to its interaction with RssB, which probably blocks the interaction of RssB with RpoS, and the consequent delivery of the RssB-RpoS complex to the ClpXP protein degradation pathway. In Escherichia coli O7:K1 (strain IAI39 / ExPEC), this protein is Anti-adapter protein IraD.